The sequence spans 118 residues: Large ribosomal subunit protein uL18 (118 aa).

The protein belongs to the universal ribosomal protein uL18 family. Part of the 50S ribosomal subunit; part of the 5S rRNA/L5/L18/L25 subcomplex. Contacts the 5S and 23S rRNAs.

This is one of the proteins that bind and probably mediate the attachment of the 5S RNA into the large ribosomal subunit, where it forms part of the central protuberance. This chain is Large ribosomal subunit protein uL18, found in Ligilactobacillus salivarius (strain UCC118) (Lactobacillus salivarius).